The primary structure comprises 217 residues: Hypersensitivity response secretion protein HrcR (217 aa).

The next 4 helical transmembrane spans lie at phenylalanine 6–valine 26, methionine 52–glutamate 72, isoleucine 158–methionine 178, and valine 190–histidine 210.

The protein belongs to the FliP/MopC/SpaP family.

It is found in the cell membrane. Its function is as follows. Involved in the secretion of PopA, a proteinaceous elicitor of the hypersensitivity response in plants. This Ralstonia nicotianae (strain ATCC BAA-1114 / GMI1000) (Ralstonia solanacearum) protein is Hypersensitivity response secretion protein HrcR (hrcR).